Here is a 447-residue protein sequence, read N- to C-terminus: MNSQQIYETSHMISNENLDVRTITMGISLLDCIDSDSTVACQKIYDKITTKAKNLVKVGQQIEAEYGIPIANKRVTVTPISLIAAASQDHDYVKYAKTLDKAAKTLGIDFIGGYSALVQKGYQTGDRTLIASLPEALAETDFVCASVNVGSTRSGINMDAVAQMGEVVVAGSKLDMMTNAKLVIFCNAVEDNPFMAGGFHGVGEPDVVINVGVSGPGVIKTALEKVKGESMDVVAETIKKTAFKVTRMGQLVGTVGAERLGVQFGIVDLSLAPTAAAGDSVAEVLEEIGVAQVGTHGTTAALAMLNDAVKKGGIMACSHVGGLSGAFIPVSEDAGMIKAVNAGTLNISKLEAMTAVCSVGLDMIAIPGDTPKETISAMIADEAAIGMINNKTTAVRVIPAPGKKVGDTVEFGGLLGYAPVMAVNKVASTAMINRGGLIPAPIHSFKN.

It belongs to the UPF0210 family. Homodimer.

The protein is UPF0210 protein Lreu_0940 of Limosilactobacillus reuteri (strain DSM 20016) (Lactobacillus reuteri).